We begin with the raw amino-acid sequence, 263 residues long: Receptor-transporting protein 1 (263 aa).

The Cytoplasmic segment spans residues 1 to 238 (MRIFRPWRLR…ETGSGWNFCS (238 aa)). Residues 88 to 197 (ASGRFHCSWC…GEFCEACQEG (110 aa)) form a 3CxxC-type zinc finger. The helical transmembrane segment at 239–259 (IPWCLFWATVLLLIIYLQLSF) threads the bilayer. Residues 260-263 (RSSV) are Extracellular-facing.

It belongs to the TMEM7 family. In terms of assembly, interacts with olfactory receptors.

The protein localises to the cell membrane. In terms of biological role, specifically promotes functional cell surface expression of olfactory receptors, but not of other GPCRs. The chain is Receptor-transporting protein 1 (RTP1) from Macaca fascicularis (Crab-eating macaque).